The sequence spans 842 residues: Alanine--tRNA ligase (842 aa).

The Zn(2+) site is built by H549, H553, C650, and H654.

This sequence belongs to the class-II aminoacyl-tRNA synthetase family. Zn(2+) is required as a cofactor.

Its subcellular location is the cytoplasm. It carries out the reaction tRNA(Ala) + L-alanine + ATP = L-alanyl-tRNA(Ala) + AMP + diphosphate. Functionally, catalyzes the attachment of alanine to tRNA(Ala) in a two-step reaction: alanine is first activated by ATP to form Ala-AMP and then transferred to the acceptor end of tRNA(Ala). Also edits incorrectly charged Ser-tRNA(Ala) and Gly-tRNA(Ala) via its editing domain. This Campylobacter jejuni subsp. jejuni serotype O:2 (strain ATCC 700819 / NCTC 11168) protein is Alanine--tRNA ligase.